The following is an 897-amino-acid chain: Alanine--tRNA ligase (897 aa).

4 residues coordinate Zn(2+): His-581, His-585, Cys-684, and His-688.

It belongs to the class-II aminoacyl-tRNA synthetase family. The cofactor is Zn(2+).

The protein resides in the cytoplasm. The enzyme catalyses tRNA(Ala) + L-alanine + ATP = L-alanyl-tRNA(Ala) + AMP + diphosphate. Functionally, catalyzes the attachment of alanine to tRNA(Ala) in a two-step reaction: alanine is first activated by ATP to form Ala-AMP and then transferred to the acceptor end of tRNA(Ala). Also edits incorrectly charged Ser-tRNA(Ala) and Gly-tRNA(Ala) via its editing domain. This chain is Alanine--tRNA ligase, found in Mycobacterium sp. (strain KMS).